The primary structure comprises 148 residues: Deoxyuridine 5'-triphosphate nucleotidohydrolase (148 aa).

The dUMP site is built by S69, G82, D85, Y88, R137, F142, and G143.

Belongs to the dUTPase family. In terms of assembly, homotrimer. Mg(2+) is required as a cofactor.

The enzyme catalyses dUTP + H2O = dUMP + diphosphate + H(+). It participates in pyrimidine metabolism; dUMP biosynthesis; dUMP from dCTP (dUTP route): step 2/2. Involved in nucleotide metabolism via production of dUMP, the immediate precursor of thymidine nucleotides, and decreases the intracellular concentration of dUTP so that uracil cannot be incorporated into DNA. This Kluyveromyces lactis (strain ATCC 8585 / CBS 2359 / DSM 70799 / NBRC 1267 / NRRL Y-1140 / WM37) (Yeast) protein is Deoxyuridine 5'-triphosphate nucleotidohydrolase (DUT1).